A 401-amino-acid chain; its full sequence is Glutamyl-tRNA reductase (401 aa).

Residues 49 to 52 (TCNR), Ser92, 97 to 99 (END), and Gln103 contribute to the substrate site. Cys50 acts as the Nucleophile in catalysis. 171-176 (GNGKMA) lines the NADP(+) pocket.

This sequence belongs to the glutamyl-tRNA reductase family. Homodimer.

It carries out the reaction (S)-4-amino-5-oxopentanoate + tRNA(Glu) + NADP(+) = L-glutamyl-tRNA(Glu) + NADPH + H(+). The protein operates within porphyrin-containing compound metabolism; protoporphyrin-IX biosynthesis; 5-aminolevulinate from L-glutamyl-tRNA(Glu): step 1/2. In terms of biological role, catalyzes the NADPH-dependent reduction of glutamyl-tRNA(Glu) to glutamate 1-semialdehyde (GSA). The chain is Glutamyl-tRNA reductase from Picrophilus torridus (strain ATCC 700027 / DSM 9790 / JCM 10055 / NBRC 100828 / KAW 2/3).